The primary structure comprises 443 residues: Leucine/methionine racemase (443 aa).

Pyridoxal 5'-phosphate-binding positions include 110 to 111 (GS) and glutamine 247. Lysine 273 is subject to N6-(pyridoxal phosphate)lysine. Residue threonine 302 participates in pyridoxal 5'-phosphate binding.

The protein belongs to the class-III pyridoxal-phosphate-dependent aminotransferase family. Pyridoxal 5'-phosphate is required as a cofactor.

The enzyme catalyses L-leucine = D-leucine. The catalysed reaction is L-methionine = D-methionine. Activity is strongly inhibited by several metal ions, including Co(2+), Zn(2+), Ni(2+), Cu(2+) and Fe(3+), and nonsubstrate amino acids such as L-arginine and L-lysine. Activity is completely abolished in the presence of hydroxylamine, an inhibitor of pyridoxal phosphate-dependent enzymes. Amino acid racemase with moderate substrate specificity. Is primarily active toward leucine, which is the preferred substrate, and methionine. Also exhibits lower levels of activity toward phenylalanine, alanine and serine. This is Leucine/methionine racemase from Thermococcus litoralis (strain ATCC 51850 / DSM 5473 / JCM 8560 / NS-C).